A 207-amino-acid polypeptide reads, in one-letter code: Thymidylate kinase (207 aa).

9 to 16 is an ATP binding site; sequence GGEGCGKS.

It belongs to the thymidylate kinase family.

It carries out the reaction dTMP + ATP = dTDP + ADP. In terms of biological role, phosphorylation of dTMP to form dTDP in both de novo and salvage pathways of dTTP synthesis. The polypeptide is Thymidylate kinase (Dehalococcoides mccartyi (strain ATCC BAA-2266 / KCTC 15142 / 195) (Dehalococcoides ethenogenes (strain 195))).